The chain runs to 322 residues: Mas-related G-protein coupled receptor member X3 (322 aa).

Over 1–31 (MDPTIPALGTSQTPINRREETPCYKQTLSLT) the chain is Extracellular. Residues 32 to 52 (VLTCIISLVGLTGNAVVLWLL) form a helical membrane-spanning segment. Residues 53 to 60 (GFRMRRNA) lie on the Cytoplasmic side of the membrane. A helical transmembrane segment spans residues 61 to 81 (VSTYILNLAAVDFLFLSGHIV). The Extracellular segment spans residues 82–96 (RSPLRLISIRHPISK). A helical transmembrane segment spans residues 97 to 117 (IVNPVMTFPYFIGLSMLSAIS). At 118–139 (TERCLSVLWPMWYRCRRPRHLS) the chain is on the cytoplasmic side. The helical transmembrane segment at 140-160 (VVVCVLLWALSLLRSILEWMF) threads the bilayer. Topologically, residues 161 to 177 (CDFLFSGADSVWCETSD) are extracellular. Residues 178-198 (FITIAWLIFLCVVLCGSSLVL) form a helical membrane-spanning segment. The Cytoplasmic segment spans residues 199-213 (LVRILCGSRKMPLTR). Residues 214–234 (LYVTILLTVLVFLLCGLPFGI) form a helical membrane-spanning segment. The Extracellular portion of the chain corresponds to 235-254 (QWALFSRIHLDWKVLFCHVH). A helical membrane pass occupies residues 255–275 (LISVFLSSLNSSANPIIYFFV). Residues 276-322 (GSFRQRQNRQNLKLVLQRALQDTPEVDEGGGRLPEETLELSVSRLEQ) lie on the Cytoplasmic side of the membrane.

This sequence belongs to the G-protein coupled receptor 1 family. Mas subfamily.

The protein resides in the cell membrane. Functionally, orphan receptor. Probably involved in the function of nociceptive neurons. May regulate nociceptor function and/or development, including the sensation or modulation of pain. Potently activated by enkephalins. The protein is Mas-related G-protein coupled receptor member X3 (MRGPRX3) of Macaca mulatta (Rhesus macaque).